The primary structure comprises 364 residues: MCPPNTPYQSQWHAFLHSLPKCEHHVHLEGCLEPPLIFSMARKNNVSLPSPSSNPAYTSVETLSKRYGHFSSLDDFLSFYFIGMTVLKTQSDFAELAWTYFKRAHAEGVHHTEVFFDPQVHMERGLEYRVIVDGYVDGCKRAEKELGISTRLIMCFLKHLPLESAQRLYDTALNEGDLGLDGRNPVIHGLGASSSEVGPPKDLFRPIYLGAKEKSINLTAHAGEEGDASYIAAALDMGATRIDHGIRLGEDPELMERVAREEVLLTVCPVSNLQLKCVKSVAEVPIRKFLDAGVRFSINSDDPAYFGAYILECYCAVQEAFNLSVADWRLIAENGVKGSWIGEERKNELLWRIDECVKRFEGVL.

Residues His25, His27, and His221 each coordinate Zn(2+). Residue Glu224 is the Proton donor of the active site. Asp301 provides a ligand contact to Zn(2+). A substrate-binding site is contributed by Asp302.

The protein belongs to the metallo-dependent hydrolases superfamily. Adenosine and AMP deaminases family. Adenine deaminase type 2 subfamily. The cofactor is Zn(2+).

The protein resides in the cytoplasm. The protein localises to the nucleus. It catalyses the reaction adenine + H2O + H(+) = hypoxanthine + NH4(+). Catalyzes the hydrolytic deamination of adenine to hypoxanthine. Plays an important role in the purine salvage pathway and in nitrogen catabolism. Has no activity with adenosine as a substrate. In Emericella nidulans (strain FGSC A4 / ATCC 38163 / CBS 112.46 / NRRL 194 / M139) (Aspergillus nidulans), this protein is Adenine deaminase (aah1).